A 138-amino-acid chain; its full sequence is Acidic phospholipase A2 Tpu-E6a (138 aa).

Residues 1-16 (MRTLWIMAVLLLGVKG) form the signal peptide. 7 disulfide bridges follow: Cys42–Cys131, Cys44–Cys60, Cys59–Cys111, Cys65–Cys138, Cys66–Cys104, Cys73–Cys97, and Cys91–Cys102. The Ca(2+) site is built by Tyr43, Gly45, and Gly47. His63 is a catalytic residue. Position 64 (Asp64) interacts with Ca(2+). Asp105 is a catalytic residue.

As to quaternary structure, monomer. Requires Ca(2+) as cofactor. In terms of tissue distribution, expressed by the venom gland.

Its subcellular location is the secreted. The catalysed reaction is a 1,2-diacyl-sn-glycero-3-phosphocholine + H2O = a 1-acyl-sn-glycero-3-phosphocholine + a fatty acid + H(+). In terms of biological role, snake venom phospholipase A2 (PLA2) that impairs hemostasis. It weakly inhibits ADP-induced platelet aggregation when tested on platelet rich plasma from human and rabbit blood (15-25% of inhibition at 5-10 ug of enzyme), and dose-dependently inhibits blood coagulation, possibly by inhibiting thrombin activation. Exhibits high hydrolytic activities toward L-dipalmitoyl phosphatidylcholine. PLA2 catalyzes the calcium-dependent hydrolysis of the 2-acyl groups in 3-sn-phosphoglycerides. The protein is Acidic phospholipase A2 Tpu-E6a of Craspedocephalus puniceus (Flat-nosed pitviper).